A 200-amino-acid polypeptide reads, in one-letter code: Phosphoheptose isomerase (200 aa).

The SIS domain maps to 37-199 (VLGCITAGGK…DVQLLGEQDL (163 aa)). 52–54 (NGG) lines the substrate pocket. 2 residues coordinate Zn(2+): H61 and E65. Residues E65, 94-95 (ND), 120-122 (TTS), S125, and Q175 contribute to the substrate site. Zn(2+) contacts are provided by Q175 and H183.

It belongs to the SIS family. GmhA subfamily. In terms of assembly, homotetramer. Zn(2+) is required as a cofactor.

It localises to the cytoplasm. It catalyses the reaction 2 D-sedoheptulose 7-phosphate = D-glycero-alpha-D-manno-heptose 7-phosphate + D-glycero-beta-D-manno-heptose 7-phosphate. It functions in the pathway carbohydrate biosynthesis; D-glycero-D-manno-heptose 7-phosphate biosynthesis; D-glycero-alpha-D-manno-heptose 7-phosphate and D-glycero-beta-D-manno-heptose 7-phosphate from sedoheptulose 7-phosphate: step 1/1. Catalyzes the isomerization of sedoheptulose 7-phosphate in D-glycero-D-manno-heptose 7-phosphate. In Methylibium petroleiphilum (strain ATCC BAA-1232 / LMG 22953 / PM1), this protein is Phosphoheptose isomerase.